We begin with the raw amino-acid sequence, 279 residues long: Acetyl-coenzyme A carboxylase carboxyl transferase subunit beta (279 aa).

The CoA carboxyltransferase N-terminal domain maps to 23 to 279; the sequence is MWWKCDECGA…IVRLMTMLAP (257 aa). Cys-27, Cys-30, Cys-46, and Cys-49 together coordinate Zn(2+). The C4-type zinc-finger motif lies at 27–49; it reads CDECGAMLHKKQLEDNFYTCSEC.

This sequence belongs to the AccD/PCCB family. As to quaternary structure, acetyl-CoA carboxylase is a heterohexamer composed of biotin carboxyl carrier protein (AccB), biotin carboxylase (AccC) and two subunits each of ACCase subunit alpha (AccA) and ACCase subunit beta (AccD). Zn(2+) is required as a cofactor.

The protein localises to the cytoplasm. It catalyses the reaction N(6)-carboxybiotinyl-L-lysyl-[protein] + acetyl-CoA = N(6)-biotinyl-L-lysyl-[protein] + malonyl-CoA. The protein operates within lipid metabolism; malonyl-CoA biosynthesis; malonyl-CoA from acetyl-CoA: step 1/1. Functionally, component of the acetyl coenzyme A carboxylase (ACC) complex. Biotin carboxylase (BC) catalyzes the carboxylation of biotin on its carrier protein (BCCP) and then the CO(2) group is transferred by the transcarboxylase to acetyl-CoA to form malonyl-CoA. The polypeptide is Acetyl-coenzyme A carboxylase carboxyl transferase subunit beta (Chlorobium phaeobacteroides (strain DSM 266 / SMG 266 / 2430)).